A 355-amino-acid polypeptide reads, in one-letter code: Protein-glutamate methylesterase/protein-glutamine glutaminase 3 (355 aa).

A Response regulatory domain is found at Lys-5 to Arg-122. Residue Asp-56 is modified to 4-aspartylphosphate. One can recognise a CheB-type methylesterase domain in the interval Ile-165–Gly-355. Residues Ser-177, His-203, and Asp-299 contribute to the active site.

The protein belongs to the CheB family. In terms of processing, phosphorylated by CheA. Phosphorylation of the N-terminal regulatory domain activates the methylesterase activity.

It localises to the cytoplasm. It carries out the reaction [protein]-L-glutamate 5-O-methyl ester + H2O = L-glutamyl-[protein] + methanol + H(+). The enzyme catalyses L-glutaminyl-[protein] + H2O = L-glutamyl-[protein] + NH4(+). Involved in chemotaxis. Part of a chemotaxis signal transduction system that modulates chemotaxis in response to various stimuli. Catalyzes the demethylation of specific methylglutamate residues introduced into the chemoreceptors (methyl-accepting chemotaxis proteins or MCP) by CheR. Also mediates the irreversible deamidation of specific glutamine residues to glutamic acid. The sequence is that of Protein-glutamate methylesterase/protein-glutamine glutaminase 3 from Geobacter metallireducens (strain ATCC 53774 / DSM 7210 / GS-15).